Reading from the N-terminus, the 360-residue chain is MTGISRRTFGLAAGFGAIGAGGLGGGCSTRSGPTPTPEPASRGVGVVLSHEQFRTDRLVAHAQAAEQAGFRYVWASDHLQPWQDNEGHSMFPWLTLALVGNSTSSILFGTGVTCPIYRYHPATVAQAFASLAILNPGRVFLGLGTGERLNEQAATDTFGNYRERHDRLIEAIVLIRQLWSGERISFTGHYFRTDELKLYDTPAMPPPIFVAASGPQSATLAGRYGDGWIAQARDINDAKLLAAFAAGAQAAGRDPTTLGKRAELFAVVGDDKAAARAADLWRFTAGAVDQPNPVEIQRAAESNPIEKVLANWAVGTDPGVHIGAVQAVLDAGAVPFLHFPQDDPITAIDFYRTNVLPELR.

The segment at residues 1 to 40 is a signal peptide (tat-type signal); the sequence is MTGISRRTFGLAAGFGAIGAGGLGGGCSTRSGPTPTPEPA. Residue aspartate 77 participates in coenzyme F420-(gamma-Glu)n binding. Histidine 78 acts as the Proton donor in catalysis. 145-146 contributes to the coenzyme F420-(gamma-Glu)n binding site; that stretch reads TG. Glutamate 147 acts as the Proton acceptor in catalysis. Coenzyme F420-(gamma-Glu)n contacts are provided by residues asparagine 150 and 213-214; that span reads SG.

This sequence belongs to the F420-dependent hydroxymycolic acid dehydrogenase family. Homodimer. In terms of processing, is exported by the Tat system. The position of the signal peptide cleavage has not been experimentally proven. May be lipidated.

The protein resides in the cell envelope. The protein operates within lipid metabolism; mycolic acid biosynthesis. Its activity is regulated as follows. Is inhibited by the anti-tuberculous drug PA-824, a bicyclic 4-nitroimidazole class compound. Therefore, this is consistent with the finding that PA-824 inhibits the formation of K-MAs and causes an accumulation of hydroxymycolic acids (H-MAs) in M.tuberculosis. Functionally, catalyzes the coenzyme F420-dependent oxidation of hydroxymycolic acids (H-MAs) to ketomycolic acids (K-MAs), a lipid class making up the mycobacterial pseudo-outer membrane and over one-third of the dry weight of M.tuberculosis. Does not exhibit F420-dependent glucose-6-phosphate dehydrogenase (FGD) activity. In Mycobacterium tuberculosis (strain ATCC 25618 / H37Rv), this protein is F420-dependent hydroxymycolic acid dehydrogenase.